Consider the following 351-residue polypeptide: uncharacterized protein (351 aa).

The first 27 residues, methionine 1–alanine 27, serve as a signal peptide directing secretion. Residues alanine 27–glycine 71 form a disordered region. Residues alanine 30–asparagine 60 show a composition bias toward basic and acidic residues.

This sequence belongs to the aerolysin family.

This is an uncharacterized protein from Staphylococcus aureus (strain USA300).